The following is a 186-amino-acid chain: TATA-box-binding protein B (186 aa).

Tandem repeats lie at residues 10 to 86 (IENV…FGDI) and 101 to 179 (VQNI…QDRL).

Belongs to the TBP family.

Its function is as follows. General factor that plays a role in the activation of archaeal genes transcribed by RNA polymerase. Binds specifically to the TATA box promoter element which lies close to the position of transcription initiation. This chain is TATA-box-binding protein B (tbpB1), found in Halobacterium salinarum (strain ATCC 700922 / JCM 11081 / NRC-1) (Halobacterium halobium).